The primary structure comprises 403 residues: 8-amino-7-oxononanoate synthase (403 aa).

R22 is a substrate binding site. Residue 109–110 (GF) participates in pyridoxal 5'-phosphate binding. H134 is a substrate binding site. Pyridoxal 5'-phosphate-binding residues include S178, H206, and T232. N6-(pyridoxal phosphate)lysine is present on K235. T348 is a binding site for substrate. The segment at 383 to 403 (SNDSGSKPSIESSFELKKEAQ) is disordered. Positions 385–394 (DSGSKPSIES) are enriched in polar residues.

This sequence belongs to the class-II pyridoxal-phosphate-dependent aminotransferase family. BioF subfamily. In terms of assembly, homodimer. Requires pyridoxal 5'-phosphate as cofactor.

The enzyme catalyses 6-carboxyhexanoyl-[ACP] + L-alanine + H(+) = (8S)-8-amino-7-oxononanoate + holo-[ACP] + CO2. Its pathway is cofactor biosynthesis; biotin biosynthesis. In terms of biological role, catalyzes the decarboxylative condensation of pimeloyl-[acyl-carrier protein] and L-alanine to produce 8-amino-7-oxononanoate (AON), [acyl-carrier protein], and carbon dioxide. The sequence is that of 8-amino-7-oxononanoate synthase from Vibrio atlanticus (strain LGP32) (Vibrio splendidus (strain Mel32)).